A 321-amino-acid polypeptide reads, in one-letter code: tRNA(Ile)-lysidine synthase (321 aa).

21-26 (SYGSDS) serves as a coordination point for ATP.

Belongs to the tRNA(Ile)-lysidine synthase family.

It is found in the cytoplasm. The enzyme catalyses cytidine(34) in tRNA(Ile2) + L-lysine + ATP = lysidine(34) in tRNA(Ile2) + AMP + diphosphate + H(+). Ligates lysine onto the cytidine present at position 34 of the AUA codon-specific tRNA(Ile) that contains the anticodon CAU, in an ATP-dependent manner. Cytidine is converted to lysidine, thus changing the amino acid specificity of the tRNA from methionine to isoleucine. The protein is tRNA(Ile)-lysidine synthase of Campylobacter jejuni subsp. jejuni serotype O:2 (strain ATCC 700819 / NCTC 11168).